Consider the following 422-residue polypeptide: 5-hydroxytryptamine receptor 1A (422 aa).

Over 1–38 the chain is Extracellular; the sequence is MDVLGPGQGNNTTSSEGPFGTRANATGISDVTFSYQVI. Residues N10, N11, and N24 are each glycosylated (N-linked (GlcNAc...) asparagine). The chain crosses the membrane as a helical span at residues 39–59; it reads TSLLLGTLIFCAVLGNACVVA. Over 60–73 the chain is Cytoplasmic; sequence AIALERSLQNVANY. The helical transmembrane segment at 74–98 threads the bilayer; it reads LIGSLAVTDLMVSVLVLPMAALYQV. The Extracellular segment spans residues 99-107; that stretch reads LNKWTLGQV. A helical membrane pass occupies residues 108 to 132; the sequence is TCDLFIALDVLCCTSSILHLCAIAL. C109 and C187 form a disulfide bridge. The serotonin site is built by D116 and C120. Residues 133–135 carry the DRY motif; important for ligand-induced conformation changes motif; that stretch reads DRY. The Cytoplasmic segment spans residues 133–152; that stretch reads DRYWAITDPIDYVNKRTPRR. Residues 153–174 form a helical membrane-spanning segment; the sequence is AAALISLTWLVGFLISIPPMLG. The Extracellular segment spans residues 175 to 193; that stretch reads WRTPEDRSDPDACTISKDH. The helical transmembrane segment at 194–216 threads the bilayer; the sequence is GYTIYSTFGAFYIPLLLMLVLYG. Residues 217 to 346 lie on the Cytoplasmic side of the membrane; the sequence is RIFRAARFRI…LARERKTVKT (130 aa). Residues 237 to 262 are disordered; that stretch reads GADSRLGASPAPQRKKSANGELGSRE. K345, T346, and G352 together coordinate 1D-myo-inositol 4-phosphate. A helical membrane pass occupies residues 347–370; that stretch reads LGIIMGTFILCWLPFFIVALVLPF. Residues 371 to 378 lie on the Extracellular side of the membrane; sequence CESSCHMP. A helical membrane pass occupies residues 379–403; it reads TLLGAIINWLGYSNSLLNPVIYAYF. The NPxxY motif; important for ligand-induced conformation changes and signaling motif lies at 396 to 400; that stretch reads NPVIY. Positions 403, 404, and 405 each coordinate 1D-myo-inositol 4-phosphate. The Cytoplasmic segment spans residues 404 to 422; that stretch reads NKDFQNAFKKILKCKFCRR.

The protein belongs to the G-protein coupled receptor 1 family. 5-hydroxytryptamine receptor subfamily. HTR1A sub-subfamily. Heterodimer; heterodimerizes with GPER1. Interacts with YIF1B. Interacts with GPR39 and GALR1.

Its subcellular location is the cell membrane. The protein resides in the cell projection. The protein localises to the dendrite. Its activity is regulated as follows. G-protein coupled receptor activity is regulated by lipids: phosphatidylinositol 4-phosphate increases HTR1A-mediated activity. G-protein coupled receptor for 5-hydroxytryptamine (serotonin). Also functions as a receptor for various drugs and psychoactive substances. Ligand binding causes a conformation change that triggers signaling via guanine nucleotide-binding proteins (G proteins) and modulates the activity of downstream effectors, such as adenylate cyclase. HTR1A is coupled to G(i)/G(o) G alpha proteins and mediates inhibitory neurotransmission: signaling inhibits adenylate cyclase activity and activates a phosphatidylinositol-calcium second messenger system that regulates the release of Ca(2+) ions from intracellular stores. Beta-arrestin family members regulate signaling by mediating both receptor desensitization and resensitization processes. This Equus caballus (Horse) protein is 5-hydroxytryptamine receptor 1A (HTR1A).